A 522-amino-acid chain; its full sequence is O-fucosyltransferase 38 (522 aa).

Residues 26-46 (AISLYLIFVFAFTIWVLVFSS) form a helical; Signal-anchor for type II membrane protein membrane-spanning segment. Over residues 54 to 67 (DHTKHQQQHHRDLI) the composition is skewed to basic and acidic residues. The tract at residues 54–73 (DHTKHQQQHHRDLIDSESFP) is disordered. A glycan (N-linked (GlcNAc...) asparagine) is linked at Asn147. Substrate is bound at residue 284-286 (HLR). N-linked (GlcNAc...) asparagine glycosylation occurs at Asn325. The disordered stretch occupies residues 475 to 496 (HKDRQGAPRRRKGPTQGIKGRA).

The protein belongs to the glycosyltransferase GT106 family.

Its subcellular location is the membrane. It functions in the pathway glycan metabolism. This is O-fucosyltransferase 38 from Arabidopsis thaliana (Mouse-ear cress).